The chain runs to 488 residues: E3 ubiquitin-protein ligase TRIM34 (488 aa).

The segment at 15-60 adopts an RING-type zinc-finger fold; it reads CPICLELLTEPLSLDCGHSLCRACITVSNKEAVTSMGGKSSCPVCG. Residues 92–134 form a B box-type zinc finger; that stretch reads KKRDLCDHHGEKLLLFCKEDRKVICWLCERSQEHRGHHTVLTE. Zn(2+) is bound by residues C97, H100, C119, and H125. Residues 131-239 adopt a coiled-coil conformation; that stretch reads VLTEEVFKEC…VRELISDVEC (109 aa). The 206-residue stretch at 283–488 folds into the B30.2/SPRY domain; it reads LSRMLQMFRE…APMTLCPPSS (206 aa).

The protein belongs to the TRIM/RBCC family. In terms of assembly, homotrimer. Interacts (via B-box and SPRY domain) with TRIM5. (Microbial infection) Interacts (via the B30.2/SPRY domain) with HIV-1 capsid complexes. Is the most abundant form. It is highly expressed in the placenta, spleen, colon and peripheral blood leukocytes.

The protein localises to the cytoplasm. Its subcellular location is the mitochondrion. It carries out the reaction S-ubiquitinyl-[E2 ubiquitin-conjugating enzyme]-L-cysteine + [acceptor protein]-L-lysine = [E2 ubiquitin-conjugating enzyme]-L-cysteine + N(6)-ubiquitinyl-[acceptor protein]-L-lysine.. It participates in protein modification; protein ubiquitination. Functionally, functions as antiviral protein and contributes to the defense against retroviral infections. Acts as a capsid-specific restriction factor with the help of TRIM5 and prevents infection from non-host-adapted retroviruses. During influenza A virus infection, promotes programmed cell death by targeting ZBP1 for 'Lys-63'-linked polyubiquitination. In turn, promotes ZBP1 recruitment of RIPK3 to mediate virus-induced programmed necrosis. Negatively regulates the function of mitochondria by enhancing mitochondrial depolarization leading to cytochrome c release and mitochondria-dependent apoptosis. Also promotes the formation of multinucleated giant cells by means of cell fusion and phagocytosis in epithelial cells. The sequence is that of E3 ubiquitin-protein ligase TRIM34 (TRIM34) from Homo sapiens (Human).